Reading from the N-terminus, the 190-residue chain is Potassium-transporting ATPase KdpC subunit (190 aa).

Residues 10-30 form a helical membrane-spanning segment; it reads TFIFLLLITGGVYPLLTTVLG.

Belongs to the KdpC family. As to quaternary structure, the system is composed of three essential subunits: KdpA, KdpB and KdpC.

The protein resides in the cell inner membrane. Functionally, part of the high-affinity ATP-driven potassium transport (or Kdp) system, which catalyzes the hydrolysis of ATP coupled with the electrogenic transport of potassium into the cytoplasm. This subunit acts as a catalytic chaperone that increases the ATP-binding affinity of the ATP-hydrolyzing subunit KdpB by the formation of a transient KdpB/KdpC/ATP ternary complex. In Escherichia coli O139:H28 (strain E24377A / ETEC), this protein is Potassium-transporting ATPase KdpC subunit.